We begin with the raw amino-acid sequence, 479 residues long: Integrin-linked protein kinase 1 (479 aa).

2 positions are modified to phosphoserine: Ser-17 and Ser-26. Residues 29 to 73 (FTRQSSLDPRRTNMRFSFGRQSSLDPIRRSPDSSKSDDEPHMSVP) are disordered. Positions 54 to 69 (PIRRSPDSSKSDDEPH) are enriched in basic and acidic residues. ANK repeat units follow at residues 77-106 (DSTM…DVNS) and 110-139 (DGRT…NIDA). Residues 194 to 461 (LEVQVRKSDG…EIIIRLDKIV (268 aa)) enclose the Protein kinase domain. ATP contacts are provided by residues 200-208 (KSDGISKGA) and Lys-222. Catalysis depends on Asp-319, which acts as the Proton acceptor.

The protein belongs to the protein kinase superfamily. Ser/Thr protein kinase family. Interacts with CML9 and POT5/HAK5. In terms of processing, autophosphorylated at Ser-17 and Ser-26.

It localises to the cell membrane. Its subcellular location is the endoplasmic reticulum membrane. The enzyme catalyses L-seryl-[protein] + ATP = O-phospho-L-seryl-[protein] + ADP + H(+). It carries out the reaction L-threonyl-[protein] + ATP = O-phospho-L-threonyl-[protein] + ADP + H(+). With respect to regulation, kinase activity is suppressed by interaction with CML9. Functionally, functions as a link between plant defense pathways, stress responses and potassium homeostasis. Promotes osmotic stress sensitivity, responses to the bacterial-derived pathogen-associated molecular pattern (PAMP) flg22, and resistance to bacterial pathogens. Promotes the accumulation of POT5/HAK5, a potassium transporter that mediates high-affinity uptake during potassium deficiency. The polypeptide is Integrin-linked protein kinase 1 (Arabidopsis thaliana (Mouse-ear cress)).